The primary structure comprises 136 residues: Outer envelope pore protein 16-4, chloroplastic (136 aa).

The tract at residues 1–59 (MEEELLSAVPCSSLTVESVLRVATAGGLYGLCAGPRDARKIGLSGVSQASFVAKSIGRF) is contains 4 beta strands. Transmembrane regions (helical) follow at residues 18–34 (SVLR…LCAG), 56–72 (IGRF…VFTM), 86–102 (WVNA…AVAI), and 110–126 (VVGM…LANC).

This sequence belongs to the Tim17/Tim22/Tim23 family. Plastid outer envelope porin OEP16 (TC 1.B.30) subfamily. In terms of assembly, homodimer and oligomers in membrane.

The protein localises to the plastid. The protein resides in the chloroplast outer membrane. Functionally, voltage-dependent high-conductance channel with a slight cation-selectivity; selective for amino acids but excludes triosephosphates or uncharged sugars. Non-essential amino acid-selective channel protein and translocation pore for NADPH:protochlorophyllide oxidoreductase A (PORA) and possibly PORB. The protein is Outer envelope pore protein 16-4, chloroplastic (OEP164) of Arabidopsis thaliana (Mouse-ear cress).